The following is a 398-amino-acid chain: Potassium channel subfamily K member 4 (398 aa).

The Cytoplasmic segment spans residues 1 to 3 (MRS). The chain crosses the membrane as a helical span at residues 4-24 (TTLLALLALVLLYLVSGALVF). Residues 25-88 (QALEQPHEQQ…WTNSSNHSSA (64 aa)) lie on the Extracellular side of the membrane. N81 and N84 each carry an N-linked (GlcNAc...) asparagine glycan. The helical intramembrane region spans 89–103 (WNLGSAFFFSGTIIT). Residues T104, I105, G106, and Y107 each coordinate K(+). The segment at 104–109 (TIGYGN) is selectivity filter 1. The stretch at 104–110 (TIGYGNI) is an intramembrane region. Topologically, residues 111-118 (VLHTDAGR) are extracellular. A helical membrane pass occupies residues 119–151 (LFCIFYALVGIPLFGMLLAGVGDRLGSSLRRGI). The Cytoplasmic portion of the chain corresponds to 152-173 (GHIEAIFLKWHVPPGLVRSLSA). The chain crosses the membrane as a helical span at residues 174 to 195 (VLFLLIGCLLFVLTPTFVFSYM). Over 196–200 (ESWSK) the chain is Extracellular. Positions 201 to 214 (LEAIYFVIVTLTTV) form an intramembrane region, helical. Positions 213, 214, 215, and 216 each coordinate K(+). The interval 213 to 218 (TVGFGD) is selectivity filter 2. Residues 215–220 (GFGDYV) lie within the membrane without spanning it. The Extracellular segment spans residues 221–234 (PGDGTGQNSPAYQP). A helical membrane pass occupies residues 235-261 (LVWFWILFGLAYFASVLTTIGNWLRAV). At 262-398 (SRRTRAEMGG…GRLRDKAVPV (137 aa)) the chain is on the cytoplasmic side. A compositionally biased stretch (polar residues) spans 282–292 (TVTARVTQRTG). Residues 282 to 398 (TVTARVTQRT…GRLRDKAVPV (117 aa)) form a disordered region. Positions 370–389 (PRGRRRPNPSKKPSRPRGPG) are enriched in basic residues.

This sequence belongs to the two pore domain potassium channel (TC 1.A.1.8) family. In terms of assembly, homodimer; disulfide-linked. Forms heterodimers with other 2-pore domain K(+) channel subunits, such as KCNK2 and KCNK10. N-glycosylated. In terms of tissue distribution, expressed in brain, spinal cord and eye. Not detected in heart, skeletal muscle, liver, lungs, kidney and testis.

Its subcellular location is the cell membrane. It localises to the cell projection. The protein resides in the axon. It catalyses the reaction K(+)(in) = K(+)(out). It carries out the reaction Rb(+)(in) = Rb(+)(out). The enzyme catalyses Cs(+)(in) = Cs(+)(out). Activated by arachidonic acid and other polyunsaturated fatty acids. Not affected by volatile general anesthetics such as chloroform, diethyl ether, halothane and isoflurane. Activated at intracellular and extracellular basic pHs. Functionally, k(+) channel that conducts voltage-dependent outward rectifying currents upon membrane depolarization. Voltage sensing is coupled to K(+) electrochemical gradient in an 'ion flux gating' mode where outward but not inward ion flow opens the gate. Converts to voltage-independent 'leak' conductance mode upon stimulation by various stimuli including mechanical membrane stretch, basic pH, temperature and lipids. Homo- and heterodimerizes to form functional channels with distinct regulatory and gating properties. At trigeminal A-beta afferent nerves, the heterodimer of KCNK2/TREK-1 and KCNK4/TRAAK is mostly coexpressed at nodes of Ranvier where it conducts voltage-independent mechanosensitive and thermosensitive currents, allowing rapid action potential repolarization, high speed and high frequence saltatory conduction on myelinated nerves to ensure prompt sensory responses. Permeable to other monovalent cations such as Rb(+) and Cs(+). This is Potassium channel subfamily K member 4 from Mus musculus (Mouse).